A 217-amino-acid polypeptide reads, in one-letter code: Regulator of G-protein signaling 19 (217 aa).

A disordered region spans residues 1 to 29 (MPTPHEAEKQITGPEEADRPPSMSSHDTA). 2 positions are modified to phosphoserine: serine 24 and serine 97. The region spanning 90 to 206 (SFDKLMHSPA…LSSPTYRALL (117 aa)) is the RGS domain. At serine 151 the chain carries Phosphoserine; by MAPK1 and MAPK3. Positions 207–217 (LQGPSQSSSEA) are interaction with GIPC.

Interacts with GIPC PDZ domain. Interacts with GNAO1. Fatty acylated. Heavily palmitoylated in the cysteine string motif. Post-translationally, phosphorylated, mainly on serine residues. As to expression, highest expression in lung. Placenta, liver and heart also express high levels of GAIP.

The protein resides in the membrane. Functionally, inhibits signal transduction by increasing the GTPase activity of G protein alpha subunits thereby driving them into their inactive GDP-bound form. Binds to G-alpha subfamily 1 members, with the order G(i)a3 &gt; G(i)a1 &gt; G(o)a &gt;&gt; G(z)a/G(i)a2. Activity on G(z)-alpha is inhibited by phosphorylation and palmitoylation of the G-protein. The polypeptide is Regulator of G-protein signaling 19 (RGS19) (Homo sapiens (Human)).